The sequence spans 230 residues: MYDIKKWRHIFKLDSAKHISDDDLDAICMSQTDAIMIGGTDDVTEDNVIHLMSRVRRYPLPLVLEISNIESVMPGFDFYFVPTVLNSTDVAFHNGTLLEALKTYGHSIDFEEVIFEGYVVCNADSKVAKHTKANTDLTTEDLEAYAQMVNHMYRLPVMYIEYSGIYGDVSKVQAVSEHLTETQLFYGGGISSEQQATEMAAIADTIIVGDIIYKDIKKALKTVKIKESSK.

Position 12 (Lys-12) interacts with sn-glycerol 1-phosphate. Mg(2+) contacts are provided by Asp-14 and Thr-40. Residues 159–164 (YIEYSG), Gly-189, and 209–210 (GD) contribute to the sn-glycerol 1-phosphate site.

This sequence belongs to the GGGP/HepGP synthase family. Group I subfamily. In terms of assembly, homodimer. It depends on Mg(2+) as a cofactor.

It carries out the reaction sn-glycerol 1-phosphate + all-trans-heptaprenyl diphosphate = 3-heptaprenyl-sn-glycero-1-phosphate + diphosphate. Its pathway is membrane lipid metabolism; glycerophospholipid metabolism. Functionally, prenyltransferase that catalyzes in vivo the transfer of the heptaprenyl moiety of heptaprenyl pyrophosphate (HepPP; 35 carbon atoms) to the C3 hydroxyl of sn-glycerol-1-phosphate (G1P), producing heptaprenylglyceryl phosphate (HepGP). This reaction is an ether-bond-formation step in the biosynthesis of archaea-type G1P-based membrane lipids found in Bacillales. This Staphylococcus aureus (strain bovine RF122 / ET3-1) protein is Heptaprenylglyceryl phosphate synthase.